We begin with the raw amino-acid sequence, 302 residues long: Transcription factor bHLH7 (302 aa).

Residues 124–154 (QPMSQPAPPMPHQQSTIRPRVRARRGQATDP) are disordered. The bHLH domain maps to 150–199 (QATDPHSIAERLRRERIAERIRSLQELVPTVNKTDRAAMIDEIVDYVKFL).

In terms of assembly, homodimer. As to expression, expressed constitutively in roots, leaves, stems and flowers.

The protein resides in the nucleus. The protein is Transcription factor bHLH7 (BHLH7) of Arabidopsis thaliana (Mouse-ear cress).